A 121-amino-acid polypeptide reads, in one-letter code: UPF0344 protein BCE_1257 (121 aa).

Helical transmembrane passes span 6–26 (ITAW…YSAG), 38–58 (LMYI…VKTA), 65–85 (WYGL…MVLV), and 92–112 (PTGA…YLGL).

This sequence belongs to the UPF0344 family.

It is found in the cell membrane. In Bacillus cereus (strain ATCC 10987 / NRS 248), this protein is UPF0344 protein BCE_1257.